A 561-amino-acid chain; its full sequence is Putative pectinesterase/pectinesterase inhibitor 24 (561 aa).

A helical transmembrane segment spans residues 26 to 46; it reads IAIIAVSLVILAGIVIGAVFG. Residues 64 to 211 are pectinesterase inhibitor 24; the sequence is DSISVSVKAV…TELTSNALAI (148 aa). N-linked (GlcNAc...) asparagine glycans are attached at residues asparagine 92, asparagine 130, asparagine 148, and asparagine 200. Residues 255-548 are pectinesterase 24; sequence DIVVAKDGSG…TVKPFIDGGR (294 aa). Substrate is bound by residues threonine 330 and glutamine 360. Aspartate 383 serves as the catalytic Proton donor; for pectinesterase activity. A disulfide bridge links cysteine 397 with cysteine 417. The active-site Nucleophile; for pectinesterase activity is the aspartate 404. The substrate site is built by arginine 468 and tryptophan 470. An N-linked (GlcNAc...) asparagine glycan is attached at asparagine 472.

It in the N-terminal section; belongs to the PMEI family. In the C-terminal section; belongs to the pectinesterase family.

It localises to the membrane. It carries out the reaction [(1-&gt;4)-alpha-D-galacturonosyl methyl ester](n) + n H2O = [(1-&gt;4)-alpha-D-galacturonosyl](n) + n methanol + n H(+). The protein operates within glycan metabolism; pectin degradation; 2-dehydro-3-deoxy-D-gluconate from pectin: step 1/5. Functionally, acts in the modification of cell walls via demethylesterification of cell wall pectin. The chain is Putative pectinesterase/pectinesterase inhibitor 24 (PME24) from Arabidopsis thaliana (Mouse-ear cress).